The sequence spans 895 residues: Probable LRR receptor-like serine/threonine-protein kinase At5g48740 (895 aa).

Residues 1–16 (MLFWVLLSSFCVFCFS) form the signal peptide. The Extracellular segment spans residues 17–544 (SPDGFLSLSC…INKKQRKQNR (528 aa)). 7 N-linked (GlcNAc...) asparagine glycosylation sites follow: Asn-36, Asn-50, Asn-60, Asn-140, Asn-195, Asn-234, and Asn-318. 6 LRR repeats span residues 385-407 (RVTSLFLSKINLRSISPTFGDLL), 408-430 (DLKTLDLHNTSLTGAIQNVGSLK), 431-453 (DLQKLNLSFNQLESFGSELEDLV), 454-477 (NLEVLDLQNNSLQGSVPETLGKLK), 478-500 (KLRLLNLENNNLVGPLPQSLNIT), and 511-532 (CLSFSSISCNNVSSTIDTPQVT). 5 N-linked (GlcNAc...) asparagine glycosylation sites follow: Asn-416, Asn-436, Asn-462, Asn-498, and Asn-521. The chain crosses the membrane as a helical span at residues 545–565 (IAILLGVSGGALFATFLVFVF). At 566–895 (MSIFTRRQRN…SYLAASAHTD (330 aa)) the chain is on the cytoplasmic side. The Protein kinase domain occupies 606–888 (RNFKEVIGRG…EAYSLQLSYL (283 aa)). Residues 612 to 620 (IGRGSFGAV) and Lys-634 contribute to the ATP site. Phosphotyrosine is present on Tyr-679. The active-site Proton acceptor is Asp-732. Position 736 is a phosphoserine (Ser-736). Phosphothreonine is present on residues Thr-767 and Thr-772. The residue at position 780 (Tyr-780) is a Phosphotyrosine.

Belongs to the protein kinase superfamily. Ser/Thr protein kinase family.

Its subcellular location is the membrane. It catalyses the reaction L-seryl-[protein] + ATP = O-phospho-L-seryl-[protein] + ADP + H(+). The catalysed reaction is L-threonyl-[protein] + ATP = O-phospho-L-threonyl-[protein] + ADP + H(+). The chain is Probable LRR receptor-like serine/threonine-protein kinase At5g48740 from Arabidopsis thaliana (Mouse-ear cress).